The primary structure comprises 279 residues: Ribosomal RNA small subunit methyltransferase A (279 aa).

Residues histidine 11, leucine 13, glycine 42, glutamate 63, aspartate 88, and asparagine 104 each coordinate S-adenosyl-L-methionine.

Belongs to the class I-like SAM-binding methyltransferase superfamily. rRNA adenine N(6)-methyltransferase family. RsmA subfamily.

Its subcellular location is the cytoplasm. The catalysed reaction is adenosine(1518)/adenosine(1519) in 16S rRNA + 4 S-adenosyl-L-methionine = N(6)-dimethyladenosine(1518)/N(6)-dimethyladenosine(1519) in 16S rRNA + 4 S-adenosyl-L-homocysteine + 4 H(+). Functionally, specifically dimethylates two adjacent adenosines (A1518 and A1519) in the loop of a conserved hairpin near the 3'-end of 16S rRNA in the 30S particle. May play a critical role in biogenesis of 30S subunits. This is Ribosomal RNA small subunit methyltransferase A from Synechococcus sp. (strain JA-3-3Ab) (Cyanobacteria bacterium Yellowstone A-Prime).